Consider the following 374-residue polypeptide: Queuine tRNA-ribosyltransferase (374 aa).

The Proton acceptor role is filled by Asp95. Substrate-binding positions include 95–99 (DSGGF), Asp149, Gln191, and Gly218. The RNA binding stretch occupies residues 249–255 (GVGTYRE). Residue Asp268 is the Nucleophile of the active site. The RNA binding; important for wobble base 34 recognition stretch occupies residues 273–277 (TRWAR). Residues Cys306, Cys308, Cys311, and His337 each coordinate Zn(2+).

Belongs to the queuine tRNA-ribosyltransferase family. In terms of assembly, homodimer. Within each dimer, one monomer is responsible for RNA recognition and catalysis, while the other monomer binds to the replacement base PreQ1. Zn(2+) serves as cofactor.

It catalyses the reaction 7-aminomethyl-7-carbaguanine + guanosine(34) in tRNA = 7-aminomethyl-7-carbaguanosine(34) in tRNA + guanine. It functions in the pathway tRNA modification; tRNA-queuosine biosynthesis. Catalyzes the base-exchange of a guanine (G) residue with the queuine precursor 7-aminomethyl-7-deazaguanine (PreQ1) at position 34 (anticodon wobble position) in tRNAs with GU(N) anticodons (tRNA-Asp, -Asn, -His and -Tyr). Catalysis occurs through a double-displacement mechanism. The nucleophile active site attacks the C1' of nucleotide 34 to detach the guanine base from the RNA, forming a covalent enzyme-RNA intermediate. The proton acceptor active site deprotonates the incoming PreQ1, allowing a nucleophilic attack on the C1' of the ribose to form the product. After dissociation, two additional enzymatic reactions on the tRNA convert PreQ1 to queuine (Q), resulting in the hypermodified nucleoside queuosine (7-(((4,5-cis-dihydroxy-2-cyclopenten-1-yl)amino)methyl)-7-deazaguanosine). The chain is Queuine tRNA-ribosyltransferase from Nostoc sp. (strain PCC 7120 / SAG 25.82 / UTEX 2576).